We begin with the raw amino-acid sequence, 343 residues long: tRNA-splicing endonuclease (343 aa).

Catalysis depends on residues Tyr-277, His-288, and Lys-319.

Belongs to the tRNA-intron endonuclease family. Archaeal long subfamily. In terms of assembly, homodimer.

It catalyses the reaction pretRNA = a 3'-half-tRNA molecule with a 5'-OH end + a 5'-half-tRNA molecule with a 2',3'-cyclic phosphate end + an intron with a 2',3'-cyclic phosphate and a 5'-hydroxyl terminus.. In terms of biological role, endonuclease that removes tRNA introns. Cleaves pre-tRNA at the 5' and 3' splice sites to release the intron. The products are an intron and two tRNA half-molecules bearing 2',3' cyclic phosphate and 5'-OH termini. Recognizes a pseudosymmetric substrate in which 2 bulged loops of 3 bases are separated by a stem of 4 bp. This is tRNA-splicing endonuclease from Halobacterium salinarum (strain ATCC 29341 / DSM 671 / R1).